Here is a 223-residue protein sequence, read N- to C-terminus: ATP phosphoribosyltransferase (223 aa).

This sequence belongs to the ATP phosphoribosyltransferase family. Short subfamily. As to quaternary structure, heteromultimer composed of HisG and HisZ subunits.

It localises to the cytoplasm. It carries out the reaction 1-(5-phospho-beta-D-ribosyl)-ATP + diphosphate = 5-phospho-alpha-D-ribose 1-diphosphate + ATP. It participates in amino-acid biosynthesis; L-histidine biosynthesis; L-histidine from 5-phospho-alpha-D-ribose 1-diphosphate: step 1/9. Its function is as follows. Catalyzes the condensation of ATP and 5-phosphoribose 1-diphosphate to form N'-(5'-phosphoribosyl)-ATP (PR-ATP). Has a crucial role in the pathway because the rate of histidine biosynthesis seems to be controlled primarily by regulation of HisG enzymatic activity. This Bordetella bronchiseptica (strain ATCC BAA-588 / NCTC 13252 / RB50) (Alcaligenes bronchisepticus) protein is ATP phosphoribosyltransferase.